Consider the following 31-residue polypeptide: Cytochrome b6-f complex subunit 6 (31 aa).

A helical membrane pass occupies residues 3–23; sequence TITSYFGFLLAVLTITSGLFI.

This sequence belongs to the PetL family. The 4 large subunits of the cytochrome b6-f complex are cytochrome b6, subunit IV (17 kDa polypeptide, PetD), cytochrome f and the Rieske protein, while the 4 small subunits are PetG, PetL, PetM and PetN. The complex functions as a dimer.

It localises to the plastid. The protein localises to the chloroplast thylakoid membrane. In terms of biological role, component of the cytochrome b6-f complex, which mediates electron transfer between photosystem II (PSII) and photosystem I (PSI), cyclic electron flow around PSI, and state transitions. PetL is important for photoautotrophic growth as well as for electron transfer efficiency and stability of the cytochrome b6-f complex. The polypeptide is Cytochrome b6-f complex subunit 6 (Lotus japonicus (Lotus corniculatus var. japonicus)).